The sequence spans 447 residues: MQDFWSKAMDAVAEQVSVQVFEAWIRPLKAGGEVGDGQFQVYAANDFSADWVKKRYGGLLEEILSEQLGEPVTLLFAADPALEKPVASKTQTVTPVQSGGETGDQENFHSGLDPRYTFDSFVVGGCNQFVHAAAARVAEAPAAAYNPLFIHGGVGLGKTHVMQAIGNRVLEIDPDKRVLYISSENFMTQLINSLRFKRVFDFKENFRSVDVLLVDDIQFIAGKKATQEEFFHTFNALYEAKKQIVMTADSFPHEIEHLEERLRSRFGMGLVADMQPPDLETRVAILQKKAGSEGLRLADEVAFFLADAVQTNVRELEGALIRVSAYASLTGKPITMALVKESLKDIVRGQDRAVTVEQIQKTVANYYKVKVTDLCSNSRSRIYSHPRQIAMYLCKQLTQHSYPEIGHRFGGRDHTTVLYAVSQVDKKQGSTPALADELASLKSMLQK.

Residues methionine 1–glutamate 70 form a domain I, interacts with DnaA modulators region. The tract at residues glutamate 70–serine 110 is domain II. The interval alanine 87–histidine 109 is disordered. Over residues serine 88–glycine 99 the composition is skewed to polar residues. The segment at glycine 111 to alanine 327 is domain III, AAA+ region. The ATP site is built by glycine 155, glycine 157, lysine 158, and threonine 159. Positions serine 328–lysine 447 are domain IV, binds dsDNA.

Belongs to the DnaA family. Oligomerizes as a right-handed, spiral filament on DNA at oriC.

It is found in the cytoplasm. Functionally, plays an essential role in the initiation and regulation of chromosomal replication. ATP-DnaA binds to the origin of replication (oriC) to initiate formation of the DNA replication initiation complex once per cell cycle. Binds the DnaA box (a 9 base pair repeat at the origin) and separates the double-stranded (ds)DNA. Forms a right-handed helical filament on oriC DNA; dsDNA binds to the exterior of the filament while single-stranded (ss)DNA is stabiized in the filament's interior. The ATP-DnaA-oriC complex binds and stabilizes one strand of the AT-rich DNA unwinding element (DUE), permitting loading of DNA polymerase. After initiation quickly degrades to an ADP-DnaA complex that is not apt for DNA replication. Binds acidic phospholipids. The chain is Chromosomal replication initiator protein DnaA from Magnetococcus marinus (strain ATCC BAA-1437 / JCM 17883 / MC-1).